Reading from the N-terminus, the 275-residue chain is 3-methyl-2-oxobutanoate hydroxymethyltransferase (275 aa).

Residues Asp44 and Asp83 each coordinate Mg(2+). 3-methyl-2-oxobutanoate-binding positions include Asp44 to Ser45, Asp83, and Lys113. Residue Glu115 participates in Mg(2+) binding. Glu182 serves as the catalytic Proton acceptor.

This sequence belongs to the PanB family. Homodecamer; pentamer of dimers. It depends on Mg(2+) as a cofactor.

It localises to the cytoplasm. It carries out the reaction 3-methyl-2-oxobutanoate + (6R)-5,10-methylene-5,6,7,8-tetrahydrofolate + H2O = 2-dehydropantoate + (6S)-5,6,7,8-tetrahydrofolate. It functions in the pathway cofactor biosynthesis; (R)-pantothenate biosynthesis; (R)-pantoate from 3-methyl-2-oxobutanoate: step 1/2. In terms of biological role, catalyzes the reversible reaction in which hydroxymethyl group from 5,10-methylenetetrahydrofolate is transferred onto alpha-ketoisovalerate to form ketopantoate. The polypeptide is 3-methyl-2-oxobutanoate hydroxymethyltransferase (Clostridium botulinum (strain Kyoto / Type A2)).